We begin with the raw amino-acid sequence, 135 residues long: Protein Wnt-7b (135 aa).

Cystine bridges form between C3–C17 and C5–C12. S9 carries O-palmitoleoyl serine; by PORCN lipidation. A disordered linker region spans residues 41–69; that stretch reads VEVVRANRLRQPTFLKIKKVRSYQKPMET. Disulfide bonds link C81-C112, C97-C107, and C134-C135. Residue N98 is glycosylated (N-linked (GlcNAc...) asparagine).

Belongs to the Wnt family. Post-translationally, palmitoleoylation is required for efficient binding to frizzled receptors. Depalmitoleoylation leads to Wnt signaling pathway inhibition. In terms of tissue distribution, in adults, in brain and lung.

The protein resides in the secreted. Its subcellular location is the extracellular space. It is found in the extracellular matrix. Functionally, ligand for members of the frizzled family of seven transmembrane receptors that functions in the canonical Wnt/beta-catenin signaling pathway. Required for normal fusion of the chorion and the allantois during placenta development. Required for central nervous system (CNS) angiogenesis and blood-brain barrier regulation. This chain is Protein Wnt-7b (wnt7b), found in Xenopus laevis (African clawed frog).